The sequence spans 601 residues: Membrane protein insertase YidC (601 aa).

A helical membrane pass occupies residues Ile-10 to Pro-30. The interval Ala-34–Pro-63 is disordered. A compositionally biased stretch (low complexity) spans Ala-39–Ala-53. Residues Pro-54–Pro-63 are compositionally biased toward pro residues. The next 4 membrane-spanning stretches (helical) occupy residues Phe-382–Val-404, Leu-455–Ile-475, Ala-510–Gly-530, and Phe-549–Tyr-569.

The protein belongs to the OXA1/ALB3/YidC family. Type 1 subfamily. As to quaternary structure, interacts with the Sec translocase complex via SecD. Specifically interacts with transmembrane segments of nascent integral membrane proteins during membrane integration.

It localises to the cell inner membrane. Required for the insertion and/or proper folding and/or complex formation of integral membrane proteins into the membrane. Involved in integration of membrane proteins that insert both dependently and independently of the Sec translocase complex, as well as at least some lipoproteins. Aids folding of multispanning membrane proteins. This chain is Membrane protein insertase YidC, found in Acidiphilium cryptum (strain JF-5).